The primary structure comprises 514 residues: Cytochrome P450 monooxygenase nodJ (514 aa).

Residues 2–24 form a helical membrane-spanning segment; that stretch reads ELIVIIITLAFCILLYGTRWRAA. N-linked (GlcNAc...) asparagine glycosylation is found at N144, N245, and N416. Residue C432 participates in heme binding.

It belongs to the cytochrome P450 family. It depends on heme as a cofactor.

The protein resides in the membrane. Its pathway is secondary metabolite biosynthesis. Cytochrome P450 monooxygenase; part of the gene cluster that mediates the biosynthesis of the indole diterpenes nodulisporic acids (NA). Nodulisporic acid A (NAA) and its chemically modified derivatives are of particular significance because of their highly potent insecticidal activity against blood-feeding arthropods and lack of observable adverse effects on mammals, in particular the tremogenicity associated with the paspaline-derived IDTs is not observed. The geranylgeranyl diphosphate (GGPP) synthase ggs1, localized outside of the cluster, is proposed to catalyze the first step in nodulisporic acid biosynthesis via conversion of farnesyl pyrophosphate and isopentyl pyrophosphate into geranylgeranyl pyrophosphate (GGPP). Condensation of indole-3-glycerol phosphate with GGPP by the prenyl transferase nodC then forms 3-geranylgeranylindole (3-GGI). Epoxidation by the FAD-dependent monooxygenase nodM leads to a single-epoxidized-GGI that is substrate of the terpene cyclase nodB for cyclization to yield emindole SB. The terminal methyl carbon, C28, of emindole SB is then oxidized by the cytochrome P450 monooxygenase nodW to produce nodulisporic acid F (NAF), the pentacyclic core of NAA. NAF is converted to nodulisporic acid E (NAE) via prenylation. This step is probably performed by one of the indole diterpene prenyltransferases nodD1 or nodD2. Several oxidation steps performed by the FAD-linked oxidoreductase nodO and one of the cytochrome P450 monooxygenase nodR, nodX or nodZ further convert NAE to nodulisporic acid D (NAD). NAD is substrate of cytochrome P450 monooxygenase nodJ to produce the precursor of nodulisporic acid C (NAC), converted to NAC by one of the indole diterpene prenyltransferases nodD1 or nodD2. The FAD-dependent monooxygenase nodY2 then oxidizes NAC to nodulisporic acid B (NAB). Finally NAB is converted to NAA by one of the cytochrome P450 monooxygenases nodR, nodX or nodZ. The sequence is that of Cytochrome P450 monooxygenase nodJ from Hypoxylon pulicicidum.